A 207-amino-acid polypeptide reads, in one-letter code: ATP synthase subunit b 2 (207 aa).

Residues 53–72 (TYASQLLWLVITFSVFYLLM) form a helical membrane-spanning segment.

This sequence belongs to the ATPase B chain family. As to quaternary structure, F-type ATPases have 2 components, F(1) - the catalytic core - and F(0) - the membrane proton channel. F(1) has five subunits: alpha(3), beta(3), gamma(1), delta(1), epsilon(1). F(0) has three main subunits: a(1), b(2) and c(10-14). The alpha and beta chains form an alternating ring which encloses part of the gamma chain. F(1) is attached to F(0) by a central stalk formed by the gamma and epsilon chains, while a peripheral stalk is formed by the delta and b chains.

It is found in the cell inner membrane. Its function is as follows. F(1)F(0) ATP synthase produces ATP from ADP in the presence of a proton or sodium gradient. F-type ATPases consist of two structural domains, F(1) containing the extramembraneous catalytic core and F(0) containing the membrane proton channel, linked together by a central stalk and a peripheral stalk. During catalysis, ATP synthesis in the catalytic domain of F(1) is coupled via a rotary mechanism of the central stalk subunits to proton translocation. Component of the F(0) channel, it forms part of the peripheral stalk, linking F(1) to F(0). The b'-subunit is a diverged and duplicated form of b found in plants and photosynthetic bacteria. In Rhizobium leguminosarum bv. trifolii (strain WSM2304), this protein is ATP synthase subunit b 2 (atpF2).